Consider the following 444-residue polypeptide: Phosphoglucosamine mutase (444 aa).

Residue S102 is the Phosphoserine intermediate of the active site. 4 residues coordinate Mg(2+): S102, D241, D243, and D245. At S102 the chain carries Phosphoserine.

It belongs to the phosphohexose mutase family. It depends on Mg(2+) as a cofactor. Activated by phosphorylation.

It carries out the reaction alpha-D-glucosamine 1-phosphate = D-glucosamine 6-phosphate. Its function is as follows. Catalyzes the conversion of glucosamine-6-phosphate to glucosamine-1-phosphate. The protein is Phosphoglucosamine mutase of Acidovorax sp. (strain JS42).